A 289-amino-acid chain; its full sequence is Probable 2-keto-3-deoxyxylonate dehydratase (289 aa).

Positions 144, 146, and 164 each coordinate Mg(2+).

The protein belongs to the FAH family.

The catalysed reaction is 2-dehydro-3-deoxy-D-arabinonate = 2,5-dioxopentanoate + H2O. It participates in carbohydrate metabolism; D-xylose degradation. Its function is as follows. Probable 2-keto-3-deoxyxylonate dehydratase involved in the degradation of D-xylose, a major component of hemicelluloses such as xylan. Catalyzes the fourth reaction in the xylose utilization pathway through dehydratation of 2-dehydro-3-deoxy-D-xylonate into alpha-ketoglutarate semialdehyde (2,5-dioxopentanoate). The polypeptide is Probable 2-keto-3-deoxyxylonate dehydratase (Haloferax volcanii (strain ATCC 29605 / DSM 3757 / JCM 8879 / NBRC 14742 / NCIMB 2012 / VKM B-1768 / DS2) (Halobacterium volcanii)).